We begin with the raw amino-acid sequence, 204 residues long: Inner membrane-spanning protein YciB (204 aa).

Helical transmembrane passes span 3-23, 45-65, 70-90, 107-127, 145-165, and 168-188; these read AEIS…VFFF, IFIA…VSWI, LPIM…LTLW, LFGV…GYVF, WGVF…MFTT, and WVAF…MAQM.

The protein belongs to the YciB family.

The protein resides in the cell inner membrane. Functionally, plays a role in cell envelope biogenesis, maintenance of cell envelope integrity and membrane homeostasis. This Agrobacterium fabrum (strain C58 / ATCC 33970) (Agrobacterium tumefaciens (strain C58)) protein is Inner membrane-spanning protein YciB.